Here is a 177-residue protein sequence, read N- to C-terminus: ATP synthase subunit delta (177 aa).

Belongs to the ATPase delta chain family. F-type ATPases have 2 components, F(1) - the catalytic core - and F(0) - the membrane proton channel. F(1) has five subunits: alpha(3), beta(3), gamma(1), delta(1), epsilon(1). F(0) has three main subunits: a(1), b(2) and c(10-14). The alpha and beta chains form an alternating ring which encloses part of the gamma chain. F(1) is attached to F(0) by a central stalk formed by the gamma and epsilon chains, while a peripheral stalk is formed by the delta and b chains.

It localises to the cell inner membrane. In terms of biological role, f(1)F(0) ATP synthase produces ATP from ADP in the presence of a proton or sodium gradient. F-type ATPases consist of two structural domains, F(1) containing the extramembraneous catalytic core and F(0) containing the membrane proton channel, linked together by a central stalk and a peripheral stalk. During catalysis, ATP synthesis in the catalytic domain of F(1) is coupled via a rotary mechanism of the central stalk subunits to proton translocation. This protein is part of the stalk that links CF(0) to CF(1). It either transmits conformational changes from CF(0) to CF(1) or is implicated in proton conduction. This Tolumonas auensis (strain DSM 9187 / NBRC 110442 / TA 4) protein is ATP synthase subunit delta.